Consider the following 328-residue polypeptide: Malate dehydrogenase (328 aa).

12–18 (GAAGQIG) lines the NAD(+) pocket. R95 and R101 together coordinate substrate. NAD(+) contacts are provided by residues N108, Q115, and 132 to 134 (VGN). Substrate-binding residues include N134 and R165. Residue H190 is the Proton acceptor of the active site.

This sequence belongs to the LDH/MDH superfamily. MDH type 2 family.

It carries out the reaction (S)-malate + NAD(+) = oxaloacetate + NADH + H(+). In terms of biological role, catalyzes the reversible oxidation of malate to oxaloacetate. The chain is Malate dehydrogenase from Delftia acidovorans (strain DSM 14801 / SPH-1).